A 205-amino-acid polypeptide reads, in one-letter code: GTP cyclohydrolase 1 (205 aa).

Zn(2+)-binding residues include cysteine 93, histidine 96, and cysteine 166.

This sequence belongs to the GTP cyclohydrolase I family. Homomer.

It carries out the reaction GTP + H2O = 7,8-dihydroneopterin 3'-triphosphate + formate + H(+). It participates in cofactor biosynthesis; 7,8-dihydroneopterin triphosphate biosynthesis; 7,8-dihydroneopterin triphosphate from GTP: step 1/1. This chain is GTP cyclohydrolase 1, found in Mycobacterium leprae (strain Br4923).